Consider the following 288-residue polypeptide: 33 kDa chaperonin (288 aa).

2 cysteine pairs are disulfide-bonded: Cys-233-Cys-235 and Cys-267-Cys-270.

This sequence belongs to the HSP33 family. Under oxidizing conditions two disulfide bonds are formed involving the reactive cysteines. Under reducing conditions zinc is bound to the reactive cysteines and the protein is inactive.

The protein resides in the cytoplasm. Redox regulated molecular chaperone. Protects both thermally unfolding and oxidatively damaged proteins from irreversible aggregation. Plays an important role in the bacterial defense system toward oxidative stress. This is 33 kDa chaperonin from Actinobacillus succinogenes (strain ATCC 55618 / DSM 22257 / CCUG 43843 / 130Z).